We begin with the raw amino-acid sequence, 506 residues long: 2-isopropylmalate synthase (506 aa).

One can recognise a Pyruvate carboxyltransferase domain in the interval 6 to 267 (IIVFDTTLRD…YTDIVTKEIY (262 aa)). Residues aspartate 15, histidine 201, histidine 203, and asparagine 237 each coordinate Mn(2+). The regulatory domain stretch occupies residues 391 to 506 (SIQTLSTSSC…LNSYLSMKNR (116 aa)).

The protein belongs to the alpha-IPM synthase/homocitrate synthase family. LeuA type 1 subfamily. As to quaternary structure, homodimer. Mn(2+) is required as a cofactor.

It is found in the cytoplasm. It carries out the reaction 3-methyl-2-oxobutanoate + acetyl-CoA + H2O = (2S)-2-isopropylmalate + CoA + H(+). The protein operates within amino-acid biosynthesis; L-leucine biosynthesis; L-leucine from 3-methyl-2-oxobutanoate: step 1/4. Functionally, catalyzes the condensation of the acetyl group of acetyl-CoA with 3-methyl-2-oxobutanoate (2-ketoisovalerate) to form 3-carboxy-3-hydroxy-4-methylpentanoate (2-isopropylmalate). The sequence is that of 2-isopropylmalate synthase from Campylobacter fetus subsp. fetus (strain 82-40).